The primary structure comprises 41 residues: uncharacterized protein (41 aa).

A disordered region spans residues 19-41 (NSTRNSSSSSRSSYSSRTTVFSL).

This is an uncharacterized protein from Dictyostelium discoideum (Social amoeba).